Here is a 378-residue protein sequence, read N- to C-terminus: MSKVLFVFGTRPEAIKMAPLVIEFKNNPAIEVKVCVTGQHREMLDQVLDFFEIEPDYDLNIMKQKQSLGSITCSILTRLDEILASFMPAHIFVHGDTTTTFAASLAAFYQNIKVWHIEAGLRTWNMNSPFPEEGNRQLTSKLAFFHAAPTLQAKDNLLRESVKEKNIIVTGNTVIDALLIGIKKITGSTGDVREIISLKNKLNLDKKIILVTLHRRENQGELLRTICDDIKQLALEHDDIEIVFPVHMSPRIREVVNEKLSGVVNIKLVEPLAYPGFIWLMNNAHFILSDSGGVQEEAPSLQKPVLVARDTTERPEVIENGAAMLVDPRIPNNIYSSCKKLLSDERLYEKMSQAGNPFGDGKASKKILDYFVSLEDIK.

His-214 is an active-site residue.

The protein belongs to the UDP-N-acetylglucosamine 2-epimerase family.

It carries out the reaction UDP-N-acetyl-alpha-D-glucosamine = UDP-N-acetyl-alpha-D-mannosamine. Its pathway is bacterial outer membrane biogenesis; LPS O-antigen biosynthesis. In Salmonella borreze, this protein is UDP-N-acetylglucosamine 2-epimerase (rfbC).